A 318-amino-acid polypeptide reads, in one-letter code: Homeobox protein Nkx-2.5 (318 aa).

The homeobox DNA-binding region spans 137–196; it reads RRKPRVLFSQAQVYELERRFKQQRYLSPAERDQLASVLKLTSTQVKIWFQNRRYKCKRQR.

This sequence belongs to the NK-2 homeobox family. Homodimer (via the homeobox); binds DNA as homodimer. Interacts (via the homeobox) with TBX5 (via the T-box); this complex binds DNA. Interacts with HIPK1 and HIPK2, but not HIPK3. Interacts with the C-terminal zinc finger of GATA4 through its homeobox domain. Also interacts with JARID2 which represses its ability to activate transcription of ANF. Interacts with FBLIM1. Interacts with TBX18. Interacts with histone methyltransferase NSD2 (via HMG box). Interacts with NEDD9. Interacts with TBX1.

Its subcellular location is the nucleus. Transcription factor required for the development of the heart and the spleen. During heart development, acts as a transcriptional activator of NPPA/ANF in cooperation with GATA4. May cooperate with TBX2 to negatively modulate expression of NPPA/ANF in the atrioventricular canal. Binds to the core DNA motif of NPPA promoter. Together with PBX1, required for spleen development through a mechanism that involves CDKN2B repression. Positively regulates transcription of genes such as COL3A1 and MMP2, resulting in increased pulmonary endothelial fibrosis in response to hypoxia. The sequence is that of Homeobox protein Nkx-2.5 (Nkx2-5) from Rattus norvegicus (Rat).